Reading from the N-terminus, the 360-residue chain is Phospho-N-acetylmuramoyl-pentapeptide-transferase (360 aa).

The Periplasmic portion of the chain corresponds to 1–25 (MLVWLAEHLVKYYSGFNVFSYLTFR). Residues 26–46 (AIVSLLTALFISLWMGPRMIA) traverse the membrane as a helical segment. Residues 47-71 (HLQKLSFGQVVRNDGPESHFSKRGT) are Cytoplasmic-facing. The helical transmembrane segment at 72-92 (PTMGGIMILTAIVISVLLWAY) threads the bilayer. Pro-93 is a topological domain (periplasmic). A helical transmembrane segment spans residues 94-114 (SNPYVWCVLVVLVGYGVIGFV). The Cytoplasmic segment spans residues 115–131 (DDYRKVVRKDTKGLIAR). A helical membrane pass occupies residues 132–152 (WKYFWMSVIALGVAFALYLVG). Residues 153–167 (KDTPATQLVVPFFKD) lie on the Periplasmic side of the membrane. The helical transmembrane segment at 168–188 (VMPQLGLFYILLAYFVIVGTG) threads the bilayer. Over 189–198 (NAVNLTDGLD) the chain is Cytoplasmic. The chain crosses the membrane as a helical span at residues 199 to 219 (GLAIMPTVFVAGGFALVAWAT). The Periplasmic segment spans residues 220-235 (GNMNFASYLHIPYLRH). Residues 236–256 (AGELVIVCTAIVGAGLGFLWF) traverse the membrane as a helical segment. Residues 257–262 (NTYPAQ) lie on the Cytoplasmic side of the membrane. Residues 263 to 283 (VFMGDVGSLALGGALGIIAVL) traverse the membrane as a helical segment. Residues 284–287 (LRQE) lie on the Periplasmic side of the membrane. The chain crosses the membrane as a helical span at residues 288–308 (FLLVIMGGVFVVETLSVILQV). Topologically, residues 309 to 337 (GSFKLRGQRIFRMAPIHHHYELKGWPEPR) are cytoplasmic. The chain crosses the membrane as a helical span at residues 338–358 (VIVRFWIISLMLVLIGLATLK). Residues 359–360 (VR) are Periplasmic-facing.

Belongs to the glycosyltransferase 4 family. MraY subfamily. Mg(2+) is required as a cofactor.

The protein localises to the cell inner membrane. The catalysed reaction is UDP-N-acetyl-alpha-D-muramoyl-L-alanyl-gamma-D-glutamyl-meso-2,6-diaminopimeloyl-D-alanyl-D-alanine + di-trans,octa-cis-undecaprenyl phosphate = di-trans,octa-cis-undecaprenyl diphospho-N-acetyl-alpha-D-muramoyl-L-alanyl-D-glutamyl-meso-2,6-diaminopimeloyl-D-alanyl-D-alanine + UMP. Its pathway is cell wall biogenesis; peptidoglycan biosynthesis. Its function is as follows. Catalyzes the initial step of the lipid cycle reactions in the biosynthesis of the cell wall peptidoglycan: transfers peptidoglycan precursor phospho-MurNAc-pentapeptide from UDP-MurNAc-pentapeptide onto the lipid carrier undecaprenyl phosphate, yielding undecaprenyl-pyrophosphoryl-MurNAc-pentapeptide, known as lipid I. The sequence is that of Phospho-N-acetylmuramoyl-pentapeptide-transferase from Escherichia coli O157:H7.